We begin with the raw amino-acid sequence, 118 residues long: Urease subunit beta (118 aa).

The protein belongs to the urease beta subunit family. As to quaternary structure, heterotrimer of UreA (gamma), UreB (beta) and UreC (alpha) subunits. Three heterotrimers associate to form the active enzyme.

The protein resides in the cytoplasm. The catalysed reaction is urea + 2 H2O + H(+) = hydrogencarbonate + 2 NH4(+). The protein operates within nitrogen metabolism; urea degradation; CO(2) and NH(3) from urea (urease route): step 1/1. This is Urease subunit beta from Aliivibrio fischeri (strain MJ11) (Vibrio fischeri).